The following is an 89-amino-acid chain: UPF0367 protein MAE_19160 (89 aa).

This sequence belongs to the UPF0367 family.

This Microcystis aeruginosa (strain NIES-843 / IAM M-2473) protein is UPF0367 protein MAE_19160.